A 458-amino-acid polypeptide reads, in one-letter code: Ribulose bisphosphate carboxylase (458 aa).

Substrate is bound at residue asparagine 111. The active-site Proton acceptor is the lysine 166. Lysine 168 contributes to the substrate binding site. Mg(2+) is bound by residues lysine 191, aspartate 193, and glutamate 194. Lysine 191 carries the post-translational modification N6-carboxylysine. The active-site Proton acceptor is histidine 287. Substrate-binding residues include arginine 288, histidine 321, and serine 368.

It belongs to the RuBisCO large chain family. Type II subfamily. As to quaternary structure, homodimer. The cofactor is Mg(2+).

The enzyme catalyses 2 (2R)-3-phosphoglycerate + 2 H(+) = D-ribulose 1,5-bisphosphate + CO2 + H2O. The catalysed reaction is D-ribulose 1,5-bisphosphate + O2 = 2-phosphoglycolate + (2R)-3-phosphoglycerate + 2 H(+). In terms of biological role, ruBisCO catalyzes two reactions: the carboxylation of D-ribulose 1,5-bisphosphate, the primary event in carbon dioxide fixation, as well as the oxidative fragmentation of the pentose substrate. Both reactions occur simultaneously and in competition at the same active site. This is Ribulose bisphosphate carboxylase (cbbM) from Rhodobacter capsulatus (Rhodopseudomonas capsulata).